A 177-amino-acid chain; its full sequence is Superoxide dismutase [Cu-Zn] 1 (177 aa).

An N-terminal signal peptide occupies residues 1–20 (MKYTILSLVAGALISCSAMA). 3 residues coordinate Cu cation: His-69, His-71, and His-94. The cysteines at positions 76 and 172 are disulfide-linked. Residues His-94, His-103, His-112, and Asp-115 each coordinate Zn(2+). Residue His-150 coordinates Cu cation.

It belongs to the Cu-Zn superoxide dismutase family. As to quaternary structure, monomer. Cu cation is required as a cofactor. The cofactor is Zn(2+).

Its subcellular location is the periplasm. It carries out the reaction 2 superoxide + 2 H(+) = H2O2 + O2. In terms of biological role, destroys radicals which are normally produced within the cells and which are toxic to biological systems. The chain is Superoxide dismutase [Cu-Zn] 1 (sodC1) from Salmonella typhimurium (strain 4/74).